The following is a 399-amino-acid chain: Calsequestrin-2 (399 aa).

Residues 1–19 (MKRTHLFIVGIYFLSSCRA) form the signal peptide. A Phosphotyrosine modification is found at tyrosine 282. N-linked (GlcNAc...) asparagine glycosylation occurs at asparagine 335. Residues 365–399 (VLSGKINTEDDDEDDDDDDNSDEEDNDDSDDDDDE) form a disordered region. The segment covering 373–399 (EDDDEDDDDDDNSDEEDNDDSDDDDDE) has biased composition (acidic residues). Phosphoserine is present on residues serine 385 and serine 393.

Belongs to the calsequestrin family. Monomer, homodimer and homooligomer. Mostly monomeric in the absence of calcium. Forms higher oligomers in a calcium-dependent manner. Dimers associate to form tetramers, that then form linear homomer chains. Interacts with ASPH and TRDN. Post-translationally, phosphorylation in the C-terminus, probably by CK2, moderately increases calcium buffering capacity. In terms of processing, N-glycosylated.

It localises to the sarcoplasmic reticulum lumen. Its function is as follows. Calsequestrin is a high-capacity, moderate affinity, calcium-binding protein and thus acts as an internal calcium store in muscle. Calcium ions are bound by clusters of acidic residues at the protein surface, especially at the interface between subunits. Can bind around 60 Ca(2+) ions. Regulates the release of lumenal Ca(2+) via the calcium release channel RYR2; this plays an important role in triggering muscle contraction. Plays a role in excitation-contraction coupling in the heart and in regulating the rate of heart beats. The polypeptide is Calsequestrin-2 (CASQ2) (Homo sapiens (Human)).